The primary structure comprises 574 residues: MYND-type zinc finger protein C31F10.10c (574 aa).

Disordered stretches follow at residues 207–253 (DSGD…QDPR) and 283–307 (MTTPSSPSYSRQTGPASETINDEID). 2 stretches are compositionally biased toward polar residues: residues 243–253 (IYSNDSFQDPR) and 283–301 (MTTPSSPSYSRQTGPASET). The MYND-type; degenerate zinc finger occupies 482–523 (NLLCNKWEEHSRQFAKCRRCRRTKYCSKECQHQAWPGHSRWC). Cys-498, Cys-501, His-519, and Cys-523 together coordinate Zn(2+). The segment at 534–574 (KRESSKINSVTESESTASPAASVIPVGTESVTSSTQSDSRL) is disordered. A compositionally biased stretch (low complexity) spans 542–556 (SVTESESTASPAASV). The span at 562-574 (ESVTSSTQSDSRL) shows a compositional bias: polar residues.

It belongs to the MUB1/samB family.

Its subcellular location is the nucleus. It localises to the cytoplasm. The protein resides in the cytoskeleton. The protein localises to the microtubule organizing center. It is found in the spindle pole body. The sequence is that of MYND-type zinc finger protein C31F10.10c from Schizosaccharomyces pombe (strain 972 / ATCC 24843) (Fission yeast).